The sequence spans 156 residues: ATP synthase subunit b (156 aa).

A helical transmembrane segment spans residues 7–29; sequence LIGQSLTFIAFILFCMKYVWPQL.

It belongs to the ATPase B chain family. As to quaternary structure, F-type ATPases have 2 components, F(1) - the catalytic core - and F(0) - the membrane proton channel. F(1) has five subunits: alpha(3), beta(3), gamma(1), delta(1), epsilon(1). F(0) has three main subunits: a(1), b(2) and c(10-14). The alpha and beta chains form an alternating ring which encloses part of the gamma chain. F(1) is attached to F(0) by a central stalk formed by the gamma and epsilon chains, while a peripheral stalk is formed by the delta and b chains.

It localises to the cell inner membrane. F(1)F(0) ATP synthase produces ATP from ADP in the presence of a proton or sodium gradient. F-type ATPases consist of two structural domains, F(1) containing the extramembraneous catalytic core and F(0) containing the membrane proton channel, linked together by a central stalk and a peripheral stalk. During catalysis, ATP synthesis in the catalytic domain of F(1) is coupled via a rotary mechanism of the central stalk subunits to proton translocation. Its function is as follows. Component of the F(0) channel, it forms part of the peripheral stalk, linking F(1) to F(0). The polypeptide is ATP synthase subunit b (Saccharophagus degradans (strain 2-40 / ATCC 43961 / DSM 17024)).